Consider the following 428-residue polypeptide: Enolase (428 aa).

Gln-163 provides a ligand contact to (2R)-2-phosphoglycerate. Residue Glu-205 is the Proton donor of the active site. Mg(2+) contacts are provided by Asp-242, Glu-283, and Asp-310. (2R)-2-phosphoglycerate contacts are provided by Lys-335, Arg-364, Ser-365, and Lys-386. Catalysis depends on Lys-335, which acts as the Proton acceptor.

This sequence belongs to the enolase family. The cofactor is Mg(2+).

It is found in the cytoplasm. The protein localises to the secreted. The protein resides in the cell surface. It carries out the reaction (2R)-2-phosphoglycerate = phosphoenolpyruvate + H2O. The protein operates within carbohydrate degradation; glycolysis; pyruvate from D-glyceraldehyde 3-phosphate: step 4/5. Its function is as follows. Catalyzes the reversible conversion of 2-phosphoglycerate (2-PG) into phosphoenolpyruvate (PEP). It is essential for the degradation of carbohydrates via glycolysis. The chain is Enolase from Sulfurihydrogenibium sp. (strain YO3AOP1).